A 154-amino-acid polypeptide reads, in one-letter code: Probable prefoldin subunit 5 (154 aa).

Belongs to the prefoldin subunit alpha family. In terms of assembly, heterohexamer of two PFD-alpha type and four PFD-beta type subunits.

Its function is as follows. Binds specifically to cytosolic chaperonin (c-CPN) and transfers target proteins to it. Binds to nascent polypeptide chain and promotes folding in an environment in which there are many competing pathways for nonnative proteins. The polypeptide is Probable prefoldin subunit 5 (Caenorhabditis briggsae).